The chain runs to 534 residues: Beta-glucosidase 32 (534 aa).

The N-terminal stretch at methionine 1–glycine 22 is a signal peptide. Position 51 (glutamine 51) interacts with a beta-D-glucoside. The N-linked (GlcNAc...) asparagine glycan is linked to asparagine 68. A beta-D-glucoside contacts are provided by residues histidine 154 and asparagine 199–glutamate 200. Glutamate 200 acts as the Proton donor in catalysis. The cysteines at positions 219 and 227 are disulfide-linked. Tyrosine 344 is a binding site for a beta-D-glucoside. A glycan (N-linked (GlcNAc...) asparagine) is linked at asparagine 374. Glutamate 417 contacts a beta-D-glucoside. Glutamate 417 serves as the catalytic Nucleophile. A glycan (N-linked (GlcNAc...) asparagine) is linked at asparagine 425. A beta-D-glucoside contacts are provided by residues tryptophan 467, glutamate 474–tryptophan 475, and phenylalanine 483.

The protein belongs to the glycosyl hydrolase 1 family.

The catalysed reaction is Hydrolysis of terminal, non-reducing beta-D-glucosyl residues with release of beta-D-glucose.. The chain is Beta-glucosidase 32 from Arabidopsis thaliana (Mouse-ear cress).